Here is a 398-residue protein sequence, read N- to C-terminus: Transcription termination factor 1, mitochondrial (398 aa).

Residues 1 to 57 constitute a mitochondrion transit peptide; it reads MQSLSLGQTSISKGLNYLTIMAPGNLWHMRNNFLFGSRCWMTRFSAENIFKSVSFRL. 5 interaction with DNA regions span residues 169–170, 246–250, 323–330, 354–357, and 383–390; these read RS, QSTKR, AEKKFNDK, SIST, and SKKRYEAK.

The protein belongs to the mTERF family. As to quaternary structure, monomer. Post-translationally, phosphoprotein with mostly four phosphate groups. While the DNA-binding activity is unaffected by the phosphorylation state, only the phosphorylated form of the protein is active for termination activity. Functioning seems to be regulated by phosphorylation.

Its subcellular location is the mitochondrion. In terms of biological role, transcription termination factor. Binds to a 28 bp region within the tRNA(Leu(uur)) gene at a position immediately adjacent to and downstream of the 16S rRNA gene; this region comprises a tridecamer sequence critical for directing accurate termination. Binds DNA along the major grove and promotes DNA bending and partial unwinding. Promotes base flipping. Transcription termination activity appears to be polarized with highest specificity for transcripts initiated on the light strand. This chain is Transcription termination factor 1, mitochondrial (MTERF1), found in Pongo abelii (Sumatran orangutan).